The sequence spans 131 residues: Serum amyloid A-3 protein (131 aa).

Residues 1 to 18 (MNLSTGIIFCFLILGVSS) form the signal peptide. A compositionally biased stretch (basic and acidic residues) spans 94–105 (MTRDQVREDSKA). The tract at residues 94 to 131 (MTRDQVREDSKADQFANEWGRSGKDPNHFRPAGLPDKY) is disordered.

It belongs to the SAA family. Expressed in the liver. Expressed in mammary epithelial cells. Expressed at high levels in mammary ductal cells and vesicle engorged alveoli, but absent from stromal and connective tissue and leukocytes. Secreted into colostrum and mastitic milk (at protein level). Low expression levels, if any, in normal milk (at protein level).

Its subcellular location is the secreted. In terms of biological role, major acute phase reactant. Apolipoprotein of the HDL complex. May have a role in protection of the mammary gland during remodeling and infection. In vitro exhibits antimicrobial activity against Escherichia coli, Streptococcus uberis and Pseudomonas aeruginosa. This chain is Serum amyloid A-3 protein (SAA3), found in Bos taurus (Bovine).